Here is a 130-residue protein sequence, read N- to C-terminus: Large ribosomal subunit protein bL12 (130 aa).

Belongs to the bacterial ribosomal protein bL12 family. Homodimer. Part of the ribosomal stalk of the 50S ribosomal subunit. Forms a multimeric L10(L12)X complex, where L10 forms an elongated spine to which 2 to 4 L12 dimers bind in a sequential fashion. Binds GTP-bound translation factors.

In terms of biological role, forms part of the ribosomal stalk which helps the ribosome interact with GTP-bound translation factors. Is thus essential for accurate translation. The chain is Large ribosomal subunit protein bL12 from Nostoc punctiforme (strain ATCC 29133 / PCC 73102).